We begin with the raw amino-acid sequence, 424 residues long: MLDLNFVVQNLPSVIAKLEKRQQSFAYLNKLPLLAQQRKSLLLQIQNLRSQKNQSAKKVAQKANAKEDIALFLQENNFLRDDLQKLEQKLKLQEQEIFDILSITPNLPHDSLPIGTDDKDNKELYCEGQIRTFPFTPKDHVYLAEKLDILDFKRASKISGSGFVVCKGLGARLERALIQFMMDLHSKKGYQEIIPPYIINEKSMFATGQLPKFEDEVYKLYNSKNNWYLNPTAEVPTINLHREEIFKPGTLPIKYVSYTTAFRQEAGSAGKDTRGIFRQHQFNKVELIQFCHPQNSYEYLEQMLKDSEEILKLLKLPYRVVLLSTGDLGFSMSKTYDLEVFLPSYNCYREIGSISNSCDFQARRANIKMKNPKNNKNEYVHILNGSGLAVGRTVIAILENYQNQDGTITVPEILQSYLGTDIIK.

L-serine is bound at residue 232–234; it reads TAE. 263–265 contributes to the ATP binding site; it reads RQE. Residue Glu-286 coordinates L-serine. ATP is bound at residue 350-353; it reads EIGS. Ser-386 contacts L-serine.

The protein belongs to the class-II aminoacyl-tRNA synthetase family. Type-1 seryl-tRNA synthetase subfamily. Homodimer. The tRNA molecule binds across the dimer.

Its subcellular location is the cytoplasm. The enzyme catalyses tRNA(Ser) + L-serine + ATP = L-seryl-tRNA(Ser) + AMP + diphosphate + H(+). It catalyses the reaction tRNA(Sec) + L-serine + ATP = L-seryl-tRNA(Sec) + AMP + diphosphate + H(+). It participates in aminoacyl-tRNA biosynthesis; selenocysteinyl-tRNA(Sec) biosynthesis; L-seryl-tRNA(Sec) from L-serine and tRNA(Sec): step 1/1. In terms of biological role, catalyzes the attachment of serine to tRNA(Ser). Is also able to aminoacylate tRNA(Sec) with serine, to form the misacylated tRNA L-seryl-tRNA(Sec), which will be further converted into selenocysteinyl-tRNA(Sec). The sequence is that of Serine--tRNA ligase from Aster yellows witches'-broom phytoplasma (strain AYWB).